The sequence spans 194 residues: Imidazoleglycerol-phosphate dehydratase (194 aa).

It belongs to the imidazoleglycerol-phosphate dehydratase family.

It localises to the cytoplasm. The enzyme catalyses D-erythro-1-(imidazol-4-yl)glycerol 3-phosphate = 3-(imidazol-4-yl)-2-oxopropyl phosphate + H2O. Its pathway is amino-acid biosynthesis; L-histidine biosynthesis; L-histidine from 5-phospho-alpha-D-ribose 1-diphosphate: step 6/9. The protein is Imidazoleglycerol-phosphate dehydratase of Oceanobacillus iheyensis (strain DSM 14371 / CIP 107618 / JCM 11309 / KCTC 3954 / HTE831).